Reading from the N-terminus, the 161-residue chain is Allophycocyanin beta chain (161 aa).

The residue at position 71 (asparagine 71) is an N4-methylasparagine. Cysteine 81 contributes to the (2R,3E)-phycocyanobilin binding site.

It belongs to the phycobiliprotein family. As to quaternary structure, heterodimer of an alpha and a beta chain. Post-translationally, contains one covalently linked phycocyanobilin chromophore.

It is found in the cellular thylakoid membrane. In terms of biological role, light-harvesting photosynthetic bile pigment-protein from the phycobiliprotein complex. Allophycocyanin has a maximum absorption at approximately 650 nanometers. The sequence is that of Allophycocyanin beta chain (apcB) from Synechococcus sp. (strain ATCC 27144 / PCC 6301 / SAUG 1402/1) (Anacystis nidulans).